A 323-amino-acid polypeptide reads, in one-letter code: Germacrene A synthase (323 aa).

Mg(2+)-binding residues include Asp-82, Asp-86, Asn-222, Ser-226, and Glu-230. Positions 82–86 (DDQCD) match the DDXXD motif motif.

This sequence belongs to the terpene synthase family. Mg(2+) serves as cofactor.

The enzyme catalyses (2E,6E)-farnesyl diphosphate = 5-epi-alpha-selinene + diphosphate. Functionally, catalyzes the cyclization of farnesyl diphosphate (FPP) to the sesquiterpene germacrene A. This chain is Germacrene A synthase, found in Nostoc punctiforme (strain ATCC 29133 / PCC 73102).